Here is a 104-residue protein sequence, read N- to C-terminus: Large ribosomal subunit protein bL21 (104 aa).

It belongs to the bacterial ribosomal protein bL21 family. As to quaternary structure, part of the 50S ribosomal subunit. Contacts protein L20.

Its function is as follows. This protein binds to 23S rRNA in the presence of protein L20. This Acidiphilium cryptum (strain JF-5) protein is Large ribosomal subunit protein bL21.